The sequence spans 170 residues: Large ribosomal subunit protein uL22c (170 aa).

It belongs to the universal ribosomal protein uL22 family. As to quaternary structure, part of the 50S ribosomal subunit.

It is found in the plastid. The protein resides in the chloroplast. Its function is as follows. This protein binds specifically to 23S rRNA. The globular domain of the protein is located near the polypeptide exit tunnel on the outside of the subunit, while an extended beta-hairpin is found that lines the wall of the exit tunnel in the center of the 70S ribosome. The chain is Large ribosomal subunit protein uL22c (rpl22) from Nandina domestica (Heavenly bamboo).